The chain runs to 189 residues: Peptidyl-tRNA hydrolase (189 aa).

Residue Tyr15 participates in tRNA binding. Catalysis depends on His20, which acts as the Proton acceptor. TRNA contacts are provided by Phe66, Asn68, and Asn114.

It belongs to the PTH family. As to quaternary structure, monomer.

Its subcellular location is the cytoplasm. It catalyses the reaction an N-acyl-L-alpha-aminoacyl-tRNA + H2O = an N-acyl-L-amino acid + a tRNA + H(+). In terms of biological role, hydrolyzes ribosome-free peptidyl-tRNAs (with 1 or more amino acids incorporated), which drop off the ribosome during protein synthesis, or as a result of ribosome stalling. Catalyzes the release of premature peptidyl moieties from peptidyl-tRNA molecules trapped in stalled 50S ribosomal subunits, and thus maintains levels of free tRNAs and 50S ribosomes. In Streptococcus pneumoniae (strain Taiwan19F-14), this protein is Peptidyl-tRNA hydrolase.